The sequence spans 240 residues: Large ribosomal subunit protein uL3 (240 aa).

Disordered stretches follow at residues 139 to 164 and 215 to 240; these read VSHR…KMPG and DAPK…QEGV. Glutamine 151 bears the N5-methylglutamine mark. Over residues 225 to 240 the composition is skewed to low complexity; the sequence is ADGGEQAAPAAEQEGV.

It belongs to the universal ribosomal protein uL3 family. Part of the 50S ribosomal subunit. Forms a cluster with proteins L14 and L19. In terms of processing, methylated by PrmB.

Its function is as follows. One of the primary rRNA binding proteins, it binds directly near the 3'-end of the 23S rRNA, where it nucleates assembly of the 50S subunit. This Rhodopseudomonas palustris (strain BisA53) protein is Large ribosomal subunit protein uL3.